The primary structure comprises 429 residues: UDP-N-acetylglucosamine 1-carboxyvinyltransferase (429 aa).

22-23 (KN) contributes to the phosphoenolpyruvate binding site. Position 102 (arginine 102) interacts with UDP-N-acetyl-alpha-D-glucosamine. Cysteine 126 acts as the Proton donor in catalysis. Position 126 is a 2-(S-cysteinyl)pyruvic acid O-phosphothioketal (cysteine 126). UDP-N-acetyl-alpha-D-glucosamine-binding positions include 131–135 (RPVDL), aspartate 316, and isoleucine 338.

This sequence belongs to the EPSP synthase family. MurA subfamily.

The protein localises to the cytoplasm. It catalyses the reaction phosphoenolpyruvate + UDP-N-acetyl-alpha-D-glucosamine = UDP-N-acetyl-3-O-(1-carboxyvinyl)-alpha-D-glucosamine + phosphate. The protein operates within cell wall biogenesis; peptidoglycan biosynthesis. Functionally, cell wall formation. Adds enolpyruvyl to UDP-N-acetylglucosamine. This is UDP-N-acetylglucosamine 1-carboxyvinyltransferase from Rhodopseudomonas palustris (strain BisB5).